Consider the following 137-residue polypeptide: 2-iminobutanoate/2-iminopropanoate deaminase (137 aa).

N-acetylserine is present on Ser-2. N6-succinyllysine occurs at positions 13, 60, and 67. Thr-74 carries the phosphothreonine modification. The residue at position 136 (Ser-136) is a Phosphoserine.

It belongs to the RutC family. As to quaternary structure, homotrimer. Interacts with YTHDF2. As to expression, expressed predominantly in liver and kidney. Lower levels in lung and brain.

It localises to the cytoplasm. Its subcellular location is the nucleus. It is found in the peroxisome. The protein resides in the mitochondrion. It catalyses the reaction 2-iminobutanoate + H2O = 2-oxobutanoate + NH4(+). The enzyme catalyses 2-iminopropanoate + H2O = pyruvate + NH4(+). Catalyzes the hydrolytic deamination of enamine/imine intermediates that form during the course of normal metabolism. May facilitate the release of ammonia from these potentially toxic reactive metabolites, reducing their impact on cellular components. It may act on enamine/imine intermediates formed by several types of pyridoxal-5'-phosphate-dependent dehydratases including L-threonine dehydratase. Functionally, also promotes endoribonucleolytic cleavage of some transcripts by promoting recruitment of the ribonuclease P/MRP complex. Acts by bridging YTHDF2 and the ribonuclease P/MRP complex. RIDA/HRSP12 binds to N6-methyladenosine (m6A)-containing mRNAs containing a 5'-GGUUC-3' motif: cooperative binding of RIDA/HRSP12 and YTHDF2 to such transcripts lead to recruitment of the ribonuclease P/MRP complex and subsequent endoribonucleolytic cleavage. The protein is 2-iminobutanoate/2-iminopropanoate deaminase of Homo sapiens (Human).